The primary structure comprises 471 residues: Glutamate--tRNA ligase (471 aa).

The 'HIGH' region motif lies at 9–19; sequence PSPTGYLHVGG. Residues cysteine 98, cysteine 100, cysteine 125, and aspartate 127 each contribute to the Zn(2+) site. A 'KMSKS' region motif is present at residues 237–241; it reads KLSKR. ATP is bound at residue lysine 240.

Belongs to the class-I aminoacyl-tRNA synthetase family. Glutamate--tRNA ligase type 1 subfamily. Monomer. The cofactor is Zn(2+).

It localises to the cytoplasm. The catalysed reaction is tRNA(Glu) + L-glutamate + ATP = L-glutamyl-tRNA(Glu) + AMP + diphosphate. Functionally, catalyzes the attachment of glutamate to tRNA(Glu) in a two-step reaction: glutamate is first activated by ATP to form Glu-AMP and then transferred to the acceptor end of tRNA(Glu). The sequence is that of Glutamate--tRNA ligase from Yersinia pseudotuberculosis serotype O:1b (strain IP 31758).